We begin with the raw amino-acid sequence, 255 residues long: Hydroxyacylglutathione hydrolase (255 aa).

His-55, His-57, Asp-59, His-60, His-111, Asp-131, and His-169 together coordinate Zn(2+).

Belongs to the metallo-beta-lactamase superfamily. Glyoxalase II family. Monomer. Zn(2+) is required as a cofactor.

The enzyme catalyses an S-(2-hydroxyacyl)glutathione + H2O = a 2-hydroxy carboxylate + glutathione + H(+). The protein operates within secondary metabolite metabolism; methylglyoxal degradation; (R)-lactate from methylglyoxal: step 2/2. Thiolesterase that catalyzes the hydrolysis of S-D-lactoyl-glutathione to form glutathione and D-lactic acid. The chain is Hydroxyacylglutathione hydrolase from Chromohalobacter salexigens (strain ATCC BAA-138 / DSM 3043 / CIP 106854 / NCIMB 13768 / 1H11).